The chain runs to 119 residues: ATP-dependent Clp protease adapter protein ClpS (119 aa).

Residues 1–29 (MICPPGENKSMAERKQGGQGNGVGSSVVT) are disordered.

Belongs to the ClpS family. Binds to the N-terminal domain of the chaperone ClpA.

In terms of biological role, involved in the modulation of the specificity of the ClpAP-mediated ATP-dependent protein degradation. The chain is ATP-dependent Clp protease adapter protein ClpS from Caulobacter vibrioides (strain ATCC 19089 / CIP 103742 / CB 15) (Caulobacter crescentus).